We begin with the raw amino-acid sequence, 584 residues long: DNA ligase (584 aa).

E249 is a binding site for ATP. The N6-AMP-lysine intermediate role is filled by K251. ATP-binding residues include R256, R271, E301, F341, R416, and K422.

It belongs to the ATP-dependent DNA ligase family. Requires Mg(2+) as cofactor.

The enzyme catalyses ATP + (deoxyribonucleotide)n-3'-hydroxyl + 5'-phospho-(deoxyribonucleotide)m = (deoxyribonucleotide)n+m + AMP + diphosphate.. In terms of biological role, DNA ligase that seals nicks in double-stranded DNA during DNA replication, DNA recombination and DNA repair. In Pyrobaculum islandicum (strain DSM 4184 / JCM 9189 / GEO3), this protein is DNA ligase.